A 226-amino-acid chain; its full sequence is 7-cyano-7-deazaguanine synthase (226 aa).

Residue 7 to 17 (ISGGMDSLVTT) participates in ATP binding. Residues cysteine 187, cysteine 195, cysteine 198, and cysteine 201 each coordinate Zn(2+).

This sequence belongs to the QueC family. It depends on Zn(2+) as a cofactor.

It catalyses the reaction 7-carboxy-7-deazaguanine + NH4(+) + ATP = 7-cyano-7-deazaguanine + ADP + phosphate + H2O + H(+). Its pathway is purine metabolism; 7-cyano-7-deazaguanine biosynthesis. In terms of biological role, catalyzes the ATP-dependent conversion of 7-carboxy-7-deazaguanine (CDG) to 7-cyano-7-deazaguanine (preQ(0)). This is 7-cyano-7-deazaguanine synthase from Chlorobium limicola (strain DSM 245 / NBRC 103803 / 6330).